Consider the following 321-residue polypeptide: Lipoyl synthase (321 aa).

7 residues coordinate [4Fe-4S] cluster: Cys68, Cys73, Cys79, Cys94, Cys98, Cys101, and Ser308. The region spanning 80-297 is the Radical SAM core domain; it reads FNHGTATFMI…KVIALELGFT (218 aa).

Belongs to the radical SAM superfamily. Lipoyl synthase family. [4Fe-4S] cluster is required as a cofactor.

It is found in the cytoplasm. The enzyme catalyses [[Fe-S] cluster scaffold protein carrying a second [4Fe-4S](2+) cluster] + N(6)-octanoyl-L-lysyl-[protein] + 2 oxidized [2Fe-2S]-[ferredoxin] + 2 S-adenosyl-L-methionine + 4 H(+) = [[Fe-S] cluster scaffold protein] + N(6)-[(R)-dihydrolipoyl]-L-lysyl-[protein] + 4 Fe(3+) + 2 hydrogen sulfide + 2 5'-deoxyadenosine + 2 L-methionine + 2 reduced [2Fe-2S]-[ferredoxin]. It functions in the pathway protein modification; protein lipoylation via endogenous pathway; protein N(6)-(lipoyl)lysine from octanoyl-[acyl-carrier-protein]: step 2/2. Catalyzes the radical-mediated insertion of two sulfur atoms into the C-6 and C-8 positions of the octanoyl moiety bound to the lipoyl domains of lipoate-dependent enzymes, thereby converting the octanoylated domains into lipoylated derivatives. The chain is Lipoyl synthase from Aliivibrio salmonicida (strain LFI1238) (Vibrio salmonicida (strain LFI1238)).